Reading from the N-terminus, the 1152-residue chain is Calcium-activated potassium channel subunit alpha-1 (1152 aa).

The disordered stretch occupies residues 1-37 (MSSNIHANHLSLDASSSSSSSSSSSSSSSSSSSSVHE). The Extracellular portion of the chain corresponds to 1 to 60 (MSSNIHANHLSLDASSSSSSSSSSSSSSSSSSSSVHEPKMDALIIPVTMEVPCDSRGQRM). A compositionally biased stretch (low complexity) spans 15 to 34 (SSSSSSSSSSSSSSSSSSSS). The chain crosses the membrane as a helical span at residues 61–81 (WWAFLASSMVTFFGGLFIILL). Over 82-152 (WRTLKYLWTV…MISAQTLTGR (71 aa)) the chain is Cytoplasmic. 3 S-palmitoyl cysteine lipidation sites follow: Cys-92, Cys-93, and Cys-95. Residues 153–173 (VLVVLVFALSIGALVIYFIDS) traverse the membrane as a helical segment. Residues 174 to 188 (SNPIESCQNFYKDFT) are Extracellular-facing. A helical membrane pass occupies residues 189–209 (LQIDMAFNVFFLLYFGLRFIA). Over 210–213 (ANDK) the chain is Cytoplasmic. The helical transmembrane segment at 214-234 (LWFWLEVNSVVDFFTVPPVFV) threads the bilayer. Topologically, residues 235–238 (SVYL) are extracellular. Residues 239 to 259 (NRSWLGLRFLRALRLIQFSEI) traverse the membrane as a helical; Voltage-sensor segment. At 260-274 (LQFLNILKTSNSIKL) the chain is on the cytoplasmic side. A helical membrane pass occupies residues 275–295 (VNLLSIFISTWLTAAGFIHLV). Residues 296-309 (ENSGDPWENFQNNQ) lie on the Extracellular side of the membrane. An intramembrane region (pore-forming) is located at residues 310–332 (ALTYWECVYLLMVTMSTVGYGDV). Residues 326-329 (TVGY) carry the Selectivity for potassium motif. At 333–341 (YAKTTLGRL) the chain is on the extracellular side. Residues 342–362 (FMVFFILGGLAMFASYVPEII) traverse the membrane as a helical segment. Residues 363–1152 (ELIGNRKKYG…KQKYVQEERL (790 aa)) are Cytoplasmic-facing. Residues 381–523 (RKHIVVCGHI…WNWKEGDDAI (143 aa)) enclose the RCK N-terminal 1 domain. Residues Glu-413, Gln-436, and Glu-438 each coordinate Mg(2+). A segment S7 region spans residues 530–550 (LGFIAQSCLAQGLSTMLANLF). Residues 587–607 (LSFPTVCELCFVKLKLLMIAI) are segment S8. A heme-binding motif region spans residues 651–655 (CKACH). Positions 675–703 (EQPSTLSPKKKQRNGGMRNSPSSSPKLMR) are disordered. Thr-679 is subject to Phosphothreonine. Phosphoserine occurs at positions 681, 694, and 698. Residues 753–773 (VLSGHVVVCIFGDVSSALIGL) form a segment S9 region. Positions 755-899 (SGHVVVCIFG…MDRSSPDNSP (145 aa)) constitute an RCK N-terminal 2 domain. Thr-886 is modified (phosphothreonine). Phosphoserine is present on residues Ser-894 and Ser-898. The short motif at 919–941 (TELVNDTNVQFLDQDDDDDPDTE) is the Calcium bowl element. Positions 928, 931, 934, and 936 each coordinate Ca(2+). Positions 948-968 (FACGTAFAVSVLDSLMSATYF) are segment S10. The segment covering 1102 to 1127 (RASLSHSSHSSQSSSKKSSSVHSIPS) has biased composition (low complexity). Positions 1102–1152 (RASLSHSSHSSQSSSKKSSSVHSIPSTANRQNRPKSRESRDKQKYVQEERL) are disordered. A compositionally biased stretch (basic and acidic residues) spans 1136 to 1152 (KSRESRDKQKYVQEERL). Phosphoserine occurs at positions 1137 and 1140.

This sequence belongs to the potassium channel family. Calcium-activated (TC 1.A.1.3) subfamily. KCa1.1/KCNMA1 sub-subfamily. In terms of assembly, homotetramer; which constitutes the calcium-activated potassium channel. Interacts with beta subunits KCNMB1, KCNMB2, KCNMB3 and KCNMB4. Interacts with gamma subunits LRRC26, LRRC38, LRRC52 and LRRC55. Beta and gamma subunits are accessory, and modulate its activity. Interacts with RAB11B. In terms of processing, phosphorylated. Phosphorylation by kinases such as PKA and/or PKG. In smooth muscles, phosphorylation affects its activity. Post-translationally, palmitoylation by ZDHHC22 and ZDHHC23 within the intracellular linker between the S0 and S1 transmembrane domains regulates localization to the plasma membrane. Depalmitoylated by LYPLA1 and LYPLAL1, leading to retard exit from the trans-Golgi network.

Its subcellular location is the cell membrane. The enzyme catalyses K(+)(in) = K(+)(out). Ethanol and carbon monoxide-bound heme increase channel activation. Heme inhibits channel activation. Potassium channel activated by both membrane depolarization or increase in cytosolic Ca(2+) that mediates export of K(+). It is also activated by the concentration of cytosolic Mg(2+). Its activation dampens the excitatory events that elevate the cytosolic Ca(2+) concentration and/or depolarize the cell membrane. It therefore contributes to repolarization of the membrane potential. Plays a key role in controlling excitability in a number of systems, such as regulation of the contraction of smooth muscle, the tuning of hair cells in the cochlea, regulation of transmitter release, and innate immunity. In smooth muscles, its activation by high level of Ca(2+), caused by ryanodine receptors in the sarcoplasmic reticulum, regulates the membrane potential. In cochlea cells, its number and kinetic properties partly determine the characteristic frequency of each hair cell and thereby helps to establish a tonotopic map. Kinetics of KCNMA1 channels are determined by alternative splicing, phosphorylation status and its combination with modulating beta subunits. Highly sensitive to both iberiotoxin (IbTx) and charybdotoxin (CTX). This chain is Calcium-activated potassium channel subunit alpha-1 (KCNMA1), found in Sus scrofa (Pig).